We begin with the raw amino-acid sequence, 122 residues long: Large ribosomal subunit protein bL12 (122 aa).

This sequence belongs to the bacterial ribosomal protein bL12 family. In terms of assembly, homodimer. Part of the ribosomal stalk of the 50S ribosomal subunit. Forms a multimeric L10(L12)X complex, where L10 forms an elongated spine to which 2 to 4 L12 dimers bind in a sequential fashion. Binds GTP-bound translation factors.

Functionally, forms part of the ribosomal stalk which helps the ribosome interact with GTP-bound translation factors. Is thus essential for accurate translation. In Xylella fastidiosa (strain M23), this protein is Large ribosomal subunit protein bL12.